The primary structure comprises 284 residues: 2-dehydro-3-deoxyphosphooctonate aldolase (284 aa).

This sequence belongs to the KdsA family.

Its subcellular location is the cytoplasm. The catalysed reaction is D-arabinose 5-phosphate + phosphoenolpyruvate + H2O = 3-deoxy-alpha-D-manno-2-octulosonate-8-phosphate + phosphate. It participates in carbohydrate biosynthesis; 3-deoxy-D-manno-octulosonate biosynthesis; 3-deoxy-D-manno-octulosonate from D-ribulose 5-phosphate: step 2/3. Its pathway is bacterial outer membrane biogenesis; lipopolysaccharide biosynthesis. The protein is 2-dehydro-3-deoxyphosphooctonate aldolase of Bordetella petrii (strain ATCC BAA-461 / DSM 12804 / CCUG 43448).